Consider the following 625-residue polypeptide: UvrABC system protein C (625 aa).

Residues 26–105 enclose the GIY-YIG domain; it reads LEPGVYFLRD…IKQHQPHFNT (80 aa). A UVR domain is found at 215-250; sequence GELLEKLATKMLAASENLDFEQAATIRDQIRGLQAL.

This sequence belongs to the UvrC family. As to quaternary structure, interacts with UvrB in an incision complex.

Its subcellular location is the cytoplasm. The UvrABC repair system catalyzes the recognition and processing of DNA lesions. UvrC both incises the 5' and 3' sides of the lesion. The N-terminal half is responsible for the 3' incision and the C-terminal half is responsible for the 5' incision. This chain is UvrABC system protein C, found in Microcystis aeruginosa (strain NIES-843 / IAM M-2473).